The primary structure comprises 570 residues: Interleukin-1 receptor accessory protein (570 aa).

The first 20 residues, 1-20 (MTLLWCVVSLYFYGILQSDA), serve as a signal peptide directing secretion. Ig-like C2-type domains follow at residues 21–128 (SERC…VAFP), 136–226 (SCFN…FHLT), and 242–350 (PPVI…VKQK). Over 21 to 367 (SERCDDWGLD…VELACGFGAT (347 aa)) the chain is Extracellular. 5 disulfides stabilise this stretch: cysteine 24-cysteine 122, cysteine 47-cysteine 114, cysteine 137-cysteine 181, cysteine 160-cysteine 212, and cysteine 266-cysteine 332. A glycan (N-linked (GlcNAc...) asparagine) is linked at asparagine 57. Residues 69–85 (IWYWTRQDRDLEEPINF) form an essential for interaction with PTPRD region. Residues asparagine 107, asparagine 111, and asparagine 118 are each glycosylated (N-linked (GlcNAc...) asparagine). Asparagine 196, asparagine 209, and asparagine 299 each carry an N-linked (GlcNAc...) asparagine glycan. A helical transmembrane segment spans residues 368 to 388 (VLLVVILIVVYHVYWLEMVLF). The Cytoplasmic portion of the chain corresponds to 389–570 (YRAHFGTDET…GLSYSSLKNV (182 aa)). In terms of domain architecture, TIR spans 403–546 (KEYDIYVSYA…RFWKQLQVAM (144 aa)). Glutamate 482 is an active-site residue. Residues 549–570 (KKSPRRSSSDEQGLSYSSLKNV) form a disordered region. Serine 557 carries the post-translational modification Phosphoserine. Residues 558–570 (DEQGLSYSSLKNV) are compositionally biased toward polar residues.

It belongs to the interleukin-1 receptor family. As to quaternary structure, the interleukin-36 receptor complex is a heterodimer of IL1RL2 and IL1RAP; the association is inhibited by IL36RN. The interleukin-1 receptor complex is a heterodimer of IL1R1 and IL1RAP. Associates with IL1R2 to form a non-signaling interleukin-1 receptor complex. Interacts with IL-33-bound IL1RL1 to form the minimal interleukin-33 signaling complex with a 1:1:1 stoichiometry. Interacts with KIT (independently of stimulation with KITLG/SCF). A mast cell-specific KITLG/SCF-induced interleukin-33 signaling complex contains IL1RL1, IL1RAP, KIT and MYD88. Interacts (via the first immunoglobilin domain) with PTPRD (via the third immunoglobilin domain); induces pre- and postsynaptic differentiation of neurons.

It localises to the cell membrane. It is found in the secreted. The enzyme catalyses NAD(+) + H2O = ADP-D-ribose + nicotinamide + H(+). In terms of biological role, coreceptor for IL1RL2 in the IL-36 signaling system. Coreceptor with IL1R1 in the IL-1 signaling system. Associates with IL1R1 bound to IL1B to form the high affinity interleukin-1 receptor complex which mediates interleukin-1-dependent activation of NF-kappa-B and other pathways. Signaling involves the recruitment of adapter molecules such as TOLLIP, MYD88, and IRAK1 or IRAK2 via the respective TIR domains of the receptor/coreceptor subunits. Recruits TOLLIP to the signaling complex. Does not bind to interleukin-1 alone; binding of IL1RN to IL1R1, prevents its association with IL1R1 to form a signaling complex. The cellular response is modulated through a non-signaling association with the membrane IL1R2 decoy receptor. Coreceptor for IL1RL1 in the IL-33 signaling system. Can bidirectionally induce pre- and postsynaptic differentiation of neurons by trans-synaptically binding to PTPRD. May play a role in IL1B-mediated costimulation of IFNG production from T-helper 1 (Th1) cells. Functionally, associates with secreted ligand-bound IL1R2 and increases the affinity of secreted IL1R2 for IL1B; this complex formation may be the dominant mechanism for neutralization of IL1B by secreted/soluble receptors. Enhances the ability of secreted IL1R1 to inhibit IL-33 signaling. This Macaca mulatta (Rhesus macaque) protein is Interleukin-1 receptor accessory protein (IL1RAP).